The chain runs to 131 residues: Protein ApaG (131 aa).

Residues Pro7–His131 enclose the ApaG domain.

The sequence is that of Protein ApaG from Bordetella bronchiseptica (strain ATCC BAA-588 / NCTC 13252 / RB50) (Alcaligenes bronchisepticus).